Here is a 542-residue protein sequence, read N- to C-terminus: DM7 family protein CG15333 (542 aa).

This sequence belongs to the DM7 family.

In Drosophila melanogaster (Fruit fly), this protein is DM7 family protein CG15333.